A 123-amino-acid polypeptide reads, in one-letter code: Beta-2-microglobulin (123 aa).

The first 21 residues, 1–21 (MSRLFLFALLGHLCFLPYLDA), serve as a signal peptide directing secretion. Positions 29-118 (PRVQVYSRYP…STLNEPKVVK (90 aa)) constitute an Ig-like C1-type domain. A disulfide bond links cysteine 49 and cysteine 104.

Belongs to the beta-2-microglobulin family. Heterodimer of an alpha chain and a beta chain. Beta-2-microglobulin is the beta-chain of major histocompatibility complex class I molecules.

It localises to the secreted. Functionally, component of the class I major histocompatibility complex (MHC). Involved in the presentation of peptide antigens to the immune system. The chain is Beta-2-microglobulin (B2M) from Monodelphis domestica (Gray short-tailed opossum).